Consider the following 485-residue polypeptide: Glutamyl-tRNA(Gln) amidotransferase subunit A (485 aa).

Residues K79 and S154 each act as charge relay system in the active site. Residue S178 is the Acyl-ester intermediate of the active site.

This sequence belongs to the amidase family. GatA subfamily. In terms of assembly, heterotrimer of A, B and C subunits.

It catalyses the reaction L-glutamyl-tRNA(Gln) + L-glutamine + ATP + H2O = L-glutaminyl-tRNA(Gln) + L-glutamate + ADP + phosphate + H(+). Functionally, allows the formation of correctly charged Gln-tRNA(Gln) through the transamidation of misacylated Glu-tRNA(Gln) in organisms which lack glutaminyl-tRNA synthetase. The reaction takes place in the presence of glutamine and ATP through an activated gamma-phospho-Glu-tRNA(Gln). The polypeptide is Glutamyl-tRNA(Gln) amidotransferase subunit A (Geobacillus thermodenitrificans (strain NG80-2)).